Consider the following 408-residue polypeptide: Histidine--tRNA ligase (408 aa).

Belongs to the class-II aminoacyl-tRNA synthetase family.

It localises to the cytoplasm. The catalysed reaction is tRNA(His) + L-histidine + ATP = L-histidyl-tRNA(His) + AMP + diphosphate + H(+). This Methanospirillum hungatei JF-1 (strain ATCC 27890 / DSM 864 / NBRC 100397 / JF-1) protein is Histidine--tRNA ligase.